Here is a 376-residue protein sequence, read N- to C-terminus: Hydroxylysine kinase (376 aa).

Catalysis depends on aspartate 229, which acts as the Proton acceptor.

It belongs to the aminoglycoside phosphotransferase family.

The protein resides in the cytoplasm. It carries out the reaction (5R)-5-hydroxy-L-lysine + GTP = (5R)-5-phosphooxy-L-lysine + GDP + H(+). In terms of biological role, catalyzes the GTP-dependent phosphorylation of 5-hydroxy-L-lysine. The sequence is that of Hydroxylysine kinase (Hykk) from Mus musculus (Mouse).